Here is a 190-residue protein sequence, read N- to C-terminus: Threonylcarbamoyl-AMP synthase (190 aa).

The 184-residue stretch at 7–190 (LSSLIKCIRK…IVNGKLIRYV (184 aa)) folds into the YrdC-like domain.

Belongs to the SUA5 family. TsaC subfamily.

It is found in the cytoplasm. The catalysed reaction is L-threonine + hydrogencarbonate + ATP = L-threonylcarbamoyladenylate + diphosphate + H2O. Required for the formation of a threonylcarbamoyl group on adenosine at position 37 (t(6)A37) in tRNAs that read codons beginning with adenine. Catalyzes the conversion of L-threonine, HCO(3)(-)/CO(2) and ATP to give threonylcarbamoyl-AMP (TC-AMP) as the acyladenylate intermediate, with the release of diphosphate. This Buchnera aphidicola subsp. Schizaphis graminum (strain Sg) protein is Threonylcarbamoyl-AMP synthase.